We begin with the raw amino-acid sequence, 492 residues long: MLDTGLLLVVILASLSVMLLVSLWQQKIRGRLPPGPTPLPFIGNYLQLNTKDVYSSITQLSERYGPVFTIHLGPRRVVVLYGYDAVKEALVDQAEEFSGRGEQATYNTLFKGYGVAFSSGERAKQLRRLSIATLRDFGVGKRGVEERILEEAGYLIKMLQGTCGAPIDPTIYLSKTVSNVISSIVFGERFDYEDTEFLSLLQMMGQMNRFAASPTGQLYDMFHSVMKYLPGPQQQIIKVTQKLEDFMIEKVRQNHSTLDPNSPRNFIDSFLIRMQEEKNGNSEFHMKNLVMTTLSLFFAGSETVSSTLRYGFLLLMKHPDVEAKVHEEIEQVIGRNRQPQYEDHMKMPYTQAVINEIQRFSNLAPLGIPRRIIKNTTFRGFFLPKGTDVFPILGSLMTDPKFFPSPKDFDPQNFLDDKGQLKKNAAFLPFSTGKRFCLGDGLAKMELFLLLTTILQNFRFKFPMKLEDINESPKPLGFTRIIPKYTMSFMPI.

The residue at position 130 (Ser-130) is a Phosphoserine. Cys-437 serves as a coordination point for heme.

It belongs to the cytochrome P450 family. Heme serves as cofactor. Liver and testis.

The protein resides in the endoplasmic reticulum membrane. It localises to the microsome membrane. The catalysed reaction is an organic molecule + reduced [NADPH--hemoprotein reductase] + O2 = an alcohol + oxidized [NADPH--hemoprotein reductase] + H2O + H(+). Highly active in the 7-alpha-hydroxylation of testosterone, progesterone and androstenedione. The sequence is that of Cytochrome P450 2A1 (Cyp2a1) from Rattus norvegicus (Rat).